The following is a 409-amino-acid chain: Na(+)-translocating NADH-quinone reductase subunit F (409 aa).

Residues 5–25 (FIFGIGAFTAIVLVLAVVILI) traverse the membrane as a helical segment. The region spanning 34–128 (GDITISINND…SMDVELPEEV (95 aa)) is the 2Fe-2S ferredoxin-type domain. [2Fe-2S] cluster contacts are provided by Cys-71, Cys-77, Cys-80, and Cys-112. The FAD-binding FR-type domain occupies 131 to 271 (VKKWECTVIS…SGPFGEFFAK (141 aa)).

Belongs to the NqrF family. In terms of assembly, composed of six subunits; NqrA, NqrB, NqrC, NqrD, NqrE and NqrF. [2Fe-2S] cluster serves as cofactor. It depends on FAD as a cofactor.

The protein resides in the cell inner membrane. The enzyme catalyses a ubiquinone + n Na(+)(in) + NADH + H(+) = a ubiquinol + n Na(+)(out) + NAD(+). Its function is as follows. NQR complex catalyzes the reduction of ubiquinone-1 to ubiquinol by two successive reactions, coupled with the transport of Na(+) ions from the cytoplasm to the periplasm. The first step is catalyzed by NqrF, which accepts electrons from NADH and reduces ubiquinone-1 to ubisemiquinone by a one-electron transfer pathway. This is Na(+)-translocating NADH-quinone reductase subunit F from Mannheimia succiniciproducens (strain KCTC 0769BP / MBEL55E).